A 454-amino-acid chain; its full sequence is Probable ECA polymerase (454 aa).

11 helical membrane passes run Phe-6–Phe-26, Val-37–Leu-57, Val-63–Ala-83, Met-122–Phe-142, Gly-157–Leu-177, Ala-183–Gly-203, Ile-209–Gly-229, Met-230–Tyr-250, Leu-343–Ile-363, Tyr-380–Ala-400, and Val-411–Leu-431.

This sequence belongs to the WzyE family. Probably part of a complex composed of WzxE, WzyE and WzzE.

It is found in the cell inner membrane. Its pathway is bacterial outer membrane biogenesis; enterobacterial common antigen biosynthesis. Probably involved in the polymerization of enterobacterial common antigen (ECA) trisaccharide repeat units. The sequence is that of Probable ECA polymerase from Cronobacter sakazakii (strain ATCC BAA-894) (Enterobacter sakazakii).